The primary structure comprises 252 residues: tRNA pseudouridine synthase A (252 aa).

The active-site Nucleophile is the Asp52. Position 110 (Tyr110) interacts with substrate.

This sequence belongs to the tRNA pseudouridine synthase TruA family. In terms of assembly, homodimer.

The catalysed reaction is uridine(38/39/40) in tRNA = pseudouridine(38/39/40) in tRNA. Its function is as follows. Formation of pseudouridine at positions 38, 39 and 40 in the anticodon stem and loop of transfer RNAs. This chain is tRNA pseudouridine synthase A, found in Syntrophotalea carbinolica (strain DSM 2380 / NBRC 103641 / GraBd1) (Pelobacter carbinolicus).